A 151-amino-acid chain; its full sequence is UPF0756 membrane protein Dred_1097 (151 aa).

The next 4 membrane-spanning stretches (helical) occupy residues 6–26, 52–72, 75–95, and 111–131; these read IILL…LATA, VGLI…NIVY, LVMK…TLAT, and LIFG…GIPI.

This sequence belongs to the UPF0756 family.

The protein resides in the cell membrane. In Desulforamulus reducens (strain ATCC BAA-1160 / DSM 100696 / MI-1) (Desulfotomaculum reducens), this protein is UPF0756 membrane protein Dred_1097.